The chain runs to 255 residues: 4-hydroxy-tetrahydrodipicolinate reductase (255 aa).

NAD(+)-binding positions include 8–13, 89–91, and 114–117; these read GASGRM, GTT, and SSNY. Histidine 146 acts as the Proton donor/acceptor in catalysis. Residue histidine 147 participates in (S)-2,3,4,5-tetrahydrodipicolinate binding. Lysine 150 (proton donor) is an active-site residue. Position 156-157 (156-157) interacts with (S)-2,3,4,5-tetrahydrodipicolinate; sequence GT.

The protein belongs to the DapB family.

Its subcellular location is the cytoplasm. It catalyses the reaction (S)-2,3,4,5-tetrahydrodipicolinate + NAD(+) + H2O = (2S,4S)-4-hydroxy-2,3,4,5-tetrahydrodipicolinate + NADH + H(+). The enzyme catalyses (S)-2,3,4,5-tetrahydrodipicolinate + NADP(+) + H2O = (2S,4S)-4-hydroxy-2,3,4,5-tetrahydrodipicolinate + NADPH + H(+). The protein operates within amino-acid biosynthesis; L-lysine biosynthesis via DAP pathway; (S)-tetrahydrodipicolinate from L-aspartate: step 4/4. In terms of biological role, catalyzes the conversion of 4-hydroxy-tetrahydrodipicolinate (HTPA) to tetrahydrodipicolinate. The polypeptide is 4-hydroxy-tetrahydrodipicolinate reductase (Methanoregula boonei (strain DSM 21154 / JCM 14090 / 6A8)).